Consider the following 661-residue polypeptide: UvrABC system protein B (661 aa).

The 156-residue stretch at 31 to 186 (DNIEGGEKAQ…LLNALVDIQF (156 aa)) folds into the Helicase ATP-binding domain. 44-51 (GATGTGKT) contributes to the ATP binding site. Positions 97–120 (YYDYYQPEAYVPSSDTYIEKDSSV) match the Beta-hairpin motif. Residues 435 to 601 (QMDDLLGEIN…TIKKEIRDLI (167 aa)) form the Helicase C-terminal domain. The UVR domain occupies 626-661 (KAMIKKLEGQMQEAAEVLDFELAAQIRDMVIELKNM).

This sequence belongs to the UvrB family. In terms of assembly, forms a heterotetramer with UvrA during the search for lesions. Interacts with UvrC in an incision complex.

Its subcellular location is the cytoplasm. In terms of biological role, the UvrABC repair system catalyzes the recognition and processing of DNA lesions. A damage recognition complex composed of 2 UvrA and 2 UvrB subunits scans DNA for abnormalities. Upon binding of the UvrA(2)B(2) complex to a putative damaged site, the DNA wraps around one UvrB monomer. DNA wrap is dependent on ATP binding by UvrB and probably causes local melting of the DNA helix, facilitating insertion of UvrB beta-hairpin between the DNA strands. Then UvrB probes one DNA strand for the presence of a lesion. If a lesion is found the UvrA subunits dissociate and the UvrB-DNA preincision complex is formed. This complex is subsequently bound by UvrC and the second UvrB is released. If no lesion is found, the DNA wraps around the other UvrB subunit that will check the other stand for damage. The chain is UvrABC system protein B from Streptococcus suis (strain 98HAH33).